Consider the following 501-residue polypeptide: Protein YLS7 (501 aa).

The chain crosses the membrane as a helical; Signal-anchor for type II membrane protein span at residues 25-45; that stretch reads IAFAIGGLTSFVIFASLLLFT. The interval 69–131 is disordered; the sequence is HSIHDPDRNP…NVSIDEEATQ (63 aa). The span at 78–89 shows a compositional bias: low complexity; sequence PSPVSSSESPPV. Basic and acidic residues predominate over residues 94–113; the sequence is SDDKVLPKGSHDSNDVRLGE. The span at 114–124 shows a compositional bias: polar residues; that stretch reads ETNSGKSSNVS. Positions 211-213 match the GDS motif motif; it reads GDS. Residues 438-467 are disordered; the sequence is RHDGHPGPYRSPDPKKITKRGPDGQPPPQD. Basic and acidic residues predominate over residues 449-459; it reads PDPKKITKRGP. Residues 467–481 carry the DCXHWCLPGXXDXWN motif motif; it reads DCLHWCMPGPVDTWN.

The protein belongs to the PC-esterase family. TBL subfamily. As to expression, expressed in roots, cauline leaves and flowers.

It is found in the membrane. In terms of biological role, may act as a bridging protein that binds pectin and other cell wall polysaccharides. Probably involved in maintaining esterification of pectins. May be involved in the specific O-acetylation of cell wall polymers. The polypeptide is Protein YLS7 (YLS7) (Arabidopsis thaliana (Mouse-ear cress)).